The sequence spans 94 residues: Nucleoid-associated protein MYPE8070 (94 aa).

The protein belongs to the YbaB/EbfC family. In terms of assembly, homodimer.

The protein resides in the cytoplasm. The protein localises to the nucleoid. Functionally, binds to DNA and alters its conformation. May be involved in regulation of gene expression, nucleoid organization and DNA protection. In Malacoplasma penetrans (strain HF-2) (Mycoplasma penetrans), this protein is Nucleoid-associated protein MYPE8070.